Consider the following 88-residue polypeptide: Phosphocarrier protein HPr (88 aa).

The 88-residue stretch at 1–88 (MEQKSYVIID…DILSKEGLTK (88 aa)) folds into the HPr domain. His-15 serves as the catalytic Pros-phosphohistidine intermediate. Ser-46 carries the post-translational modification Phosphoserine; by HPrK/P.

The protein belongs to the HPr family.

It is found in the cytoplasm. Phosphorylation on Ser-46 inhibits the phosphoryl transfer from enzyme I to HPr. General (non sugar-specific) component of the phosphoenolpyruvate-dependent sugar phosphotransferase system (sugar PTS). This major carbohydrate active-transport system catalyzes the phosphorylation of incoming sugar substrates concomitantly with their translocation across the cell membrane. The phosphoryl group from phosphoenolpyruvate (PEP) is transferred to the phosphoryl carrier protein HPr by enzyme I. Phospho-HPr then transfers it to the PTS EIIA domain. This chain is Phosphocarrier protein HPr (ptsH), found in Staphylococcus xylosus.